We begin with the raw amino-acid sequence, 250 residues long: tRNA (guanine-N(7)-)-methyltransferase (250 aa).

The segment covering 1–10 has biased composition (basic and acidic residues); sequence MTPDDPRDAS. Residues 1–30 are disordered; sequence MTPDDPRDASDASLADATADSASRGHGSFF. Over residues 11-24 the composition is skewed to low complexity; sequence DASLADATADSASR. 4 residues coordinate S-adenosyl-L-methionine: Glu-79, Glu-104, Asp-131, and Asp-153. Asp-153 is an active-site residue. Lys-157 and Asp-189 together coordinate substrate.

It belongs to the class I-like SAM-binding methyltransferase superfamily. TrmB family.

It carries out the reaction guanosine(46) in tRNA + S-adenosyl-L-methionine = N(7)-methylguanosine(46) in tRNA + S-adenosyl-L-homocysteine. It functions in the pathway tRNA modification; N(7)-methylguanine-tRNA biosynthesis. Its function is as follows. Catalyzes the formation of N(7)-methylguanine at position 46 (m7G46) in tRNA. The chain is tRNA (guanine-N(7)-)-methyltransferase from Rhodopseudomonas palustris (strain BisA53).